The following is a 183-amino-acid chain: ADP-ribosylation factor 3 (183 aa).

Gly2 is lipidated: N-myristoyl glycine. GTP is bound by residues 24 to 31 (GLDKAGKT), 67 to 71 (DVGGQ), and 126 to 129 (NKQD).

It belongs to the small GTPase superfamily. Arf family. In terms of assembly, interacts with RUD3.

Its subcellular location is the golgi apparatus. Functionally, GTP-binding protein involved in protein trafficking; may modulate vesicle budding and uncoating within the Golgi apparatus. The protein is ADP-ribosylation factor 3 (ARF3) of Saccharomyces cerevisiae (strain ATCC 204508 / S288c) (Baker's yeast).